Here is a 42-residue protein sequence, read N- to C-terminus: Iota-conotoxin-like R11.1 (42 aa).

4 disulfides stabilise this stretch: C5/C19, C12/C22, C18/C27, and C21/C36.

Belongs to the conotoxin I1 superfamily. Expressed by the venom duct.

The protein localises to the secreted. In terms of biological role, iota-conotoxins bind to voltage-gated sodium channels (Nav) and act as agonists by shifting the voltage-dependence of activation to more hyperpolarized levels. Produces general excitatory symptoms. The chain is Iota-conotoxin-like R11.1 from Conus radiatus (Rayed cone).